A 446-amino-acid chain; its full sequence is N-succinylarginine dihydrolase (446 aa).

Residues 19-28, Asn-110, and 137-138 contribute to the substrate site; these read SGLSYGNVAS and HR. The active site involves Glu-174. Arg-214 contributes to the substrate binding site. Residue His-250 is part of the active site. Substrate contacts are provided by Asp-252 and Asn-363. Cys-369 acts as the Nucleophile in catalysis.

It belongs to the succinylarginine dihydrolase family. In terms of assembly, homodimer.

It carries out the reaction N(2)-succinyl-L-arginine + 2 H2O + 2 H(+) = N(2)-succinyl-L-ornithine + 2 NH4(+) + CO2. It functions in the pathway amino-acid degradation; L-arginine degradation via AST pathway; L-glutamate and succinate from L-arginine: step 2/5. Catalyzes the hydrolysis of N(2)-succinylarginine into N(2)-succinylornithine, ammonia and CO(2). This Hahella chejuensis (strain KCTC 2396) protein is N-succinylarginine dihydrolase.